The chain runs to 232 residues: Large ribosomal subunit protein uL1 (232 aa).

It belongs to the universal ribosomal protein uL1 family. In terms of assembly, part of the 50S ribosomal subunit.

In terms of biological role, binds directly to 23S rRNA. The L1 stalk is quite mobile in the ribosome, and is involved in E site tRNA release. Protein L1 is also a translational repressor protein, it controls the translation of the L11 operon by binding to its mRNA. This is Large ribosomal subunit protein uL1 from Roseobacter denitrificans (strain ATCC 33942 / OCh 114) (Erythrobacter sp. (strain OCh 114)).